The primary structure comprises 437 residues: tRNA-2-methylthio-N(6)-dimethylallyladenosine synthase (437 aa).

Positions 1–115 constitute an MTTase N-terminal domain; the sequence is MKVYIETMGC…ISQVIHKEKA (115 aa). [4Fe-4S] cluster is bound by residues Cys10, Cys46, Cys78, Cys148, Cys152, and Cys155. The Radical SAM core domain occupies 134–367; sequence KKAQIRSLLN…QNRHKEILEE (234 aa). A TRAM domain is found at 370-436; the sequence is KLEVGKTHVV…KGRLIATAKG (67 aa).

It belongs to the methylthiotransferase family. MiaB subfamily. In terms of assembly, monomer. It depends on [4Fe-4S] cluster as a cofactor.

The protein localises to the cytoplasm. The catalysed reaction is N(6)-dimethylallyladenosine(37) in tRNA + (sulfur carrier)-SH + AH2 + 2 S-adenosyl-L-methionine = 2-methylsulfanyl-N(6)-dimethylallyladenosine(37) in tRNA + (sulfur carrier)-H + 5'-deoxyadenosine + L-methionine + A + S-adenosyl-L-homocysteine + 2 H(+). Its function is as follows. Catalyzes the methylthiolation of N6-(dimethylallyl)adenosine (i(6)A), leading to the formation of 2-methylthio-N6-(dimethylallyl)adenosine (ms(2)i(6)A) at position 37 in tRNAs that read codons beginning with uridine. The sequence is that of tRNA-2-methylthio-N(6)-dimethylallyladenosine synthase from Helicobacter pylori (strain Shi470).